Here is a 340-residue protein sequence, read N- to C-terminus: DNA-directed RNA polymerase subunit alpha (340 aa).

An alpha N-terminal domain (alpha-NTD) region spans residues 1 to 233 (MYRNWRDLIS…EQLSIFINFD (233 aa)). The interval 251 to 340 (INENLYRSVD…RLRGERKDEE (90 aa)) is alpha C-terminal domain (alpha-CTD).

This sequence belongs to the RNA polymerase alpha chain family. In terms of assembly, homodimer. The RNAP catalytic core consists of 2 alpha, 1 beta, 1 beta' and 1 omega subunit. When a sigma factor is associated with the core the holoenzyme is formed, which can initiate transcription.

It catalyses the reaction RNA(n) + a ribonucleoside 5'-triphosphate = RNA(n+1) + diphosphate. Its function is as follows. DNA-dependent RNA polymerase catalyzes the transcription of DNA into RNA using the four ribonucleoside triphosphates as substrates. The sequence is that of DNA-directed RNA polymerase subunit alpha from Geobacter sulfurreducens (strain ATCC 51573 / DSM 12127 / PCA).